The sequence spans 338 residues: MKVFYDKDCDLSIIQGKKVAIIGYGSQGHAQACNLKDSGVDVTVGLRKGSATVAKAEAHGLKVTDVAAAVAGADLVMILTPDEFQSQLYKNEIEPNIKKGATLAFSHGFAIHYNQVVPRADLDVIMIAPKAPGHTVRSEFVKGGGIPDLIAIYQDASGNAKNVALSYAAGVGGGRTGIIETTFKDETETDLFGEQAVLCGGTVELVKAGFETLVEAGYAPEMAYFECLHELKLIVDLMYEGGIANMNYSISNNAEYGEYVTGPEVINAESRQAMRNALKRIQDGEYAKMFISEGATGYPSMTAKRRNNAAHGIEIIGEQLRSMMPWIGANKIVDKAKN.

The KARI N-terminal Rossmann domain maps to 1-181 (MKVFYDKDCD…GGGRTGIIET (181 aa)). NADP(+)-binding positions include 24 to 27 (YGSQ), Arg47, Ser50, Thr52, and 82 to 85 (DEFQ). Residue His107 is part of the active site. An NADP(+)-binding site is contributed by Gly133. A KARI C-terminal knotted domain is found at 182 to 327 (TFKDETETDL…EQLRSMMPWI (146 aa)). The Mg(2+) site is built by Asp190, Glu194, Glu226, and Glu230. A substrate-binding site is contributed by Ser251.

The protein belongs to the ketol-acid reductoisomerase family. It depends on Mg(2+) as a cofactor.

It catalyses the reaction (2R)-2,3-dihydroxy-3-methylbutanoate + NADP(+) = (2S)-2-acetolactate + NADPH + H(+). It carries out the reaction (2R,3R)-2,3-dihydroxy-3-methylpentanoate + NADP(+) = (S)-2-ethyl-2-hydroxy-3-oxobutanoate + NADPH + H(+). Its pathway is amino-acid biosynthesis; L-isoleucine biosynthesis; L-isoleucine from 2-oxobutanoate: step 2/4. It functions in the pathway amino-acid biosynthesis; L-valine biosynthesis; L-valine from pyruvate: step 2/4. Involved in the biosynthesis of branched-chain amino acids (BCAA). Catalyzes an alkyl-migration followed by a ketol-acid reduction of (S)-2-acetolactate (S2AL) to yield (R)-2,3-dihydroxy-isovalerate. In the isomerase reaction, S2AL is rearranged via a Mg-dependent methyl migration to produce 3-hydroxy-3-methyl-2-ketobutyrate (HMKB). In the reductase reaction, this 2-ketoacid undergoes a metal-dependent reduction by NADPH to yield (R)-2,3-dihydroxy-isovalerate. This chain is Ketol-acid reductoisomerase (NADP(+)), found in Pseudomonas fluorescens (strain ATCC BAA-477 / NRRL B-23932 / Pf-5).